The chain runs to 365 residues: 3-dehydroquinate synthase (365 aa).

NAD(+)-binding positions include glycine 106 to aspartate 110, threonine 130 to threonine 131, lysine 142, lysine 151, and phenylalanine 169 to threonine 172. The Zn(2+) site is built by glutamate 184, histidine 247, and histidine 264.

Belongs to the sugar phosphate cyclases superfamily. Dehydroquinate synthase family. Co(2+) serves as cofactor. The cofactor is Zn(2+). NAD(+) is required as a cofactor.

The protein localises to the cytoplasm. It catalyses the reaction 7-phospho-2-dehydro-3-deoxy-D-arabino-heptonate = 3-dehydroquinate + phosphate. It functions in the pathway metabolic intermediate biosynthesis; chorismate biosynthesis; chorismate from D-erythrose 4-phosphate and phosphoenolpyruvate: step 2/7. In terms of biological role, catalyzes the conversion of 3-deoxy-D-arabino-heptulosonate 7-phosphate (DAHP) to dehydroquinate (DHQ). This chain is 3-dehydroquinate synthase, found in Listeria monocytogenes serotype 4a (strain HCC23).